Here is a 374-residue protein sequence, read N- to C-terminus: Chaperone protein DnaJ (374 aa).

In terms of domain architecture, J spans 5–69 (DYYEVLGVSK…DKKAKYDQFG (65 aa)). The segment at 141–223 (GVNKKTILNL…CHGKGVESKR (83 aa)) adopts a CR-type zinc-finger fold. The Zn(2+) site is built by cysteine 154, cysteine 157, cysteine 171, cysteine 174, cysteine 197, cysteine 200, cysteine 211, and cysteine 214. CXXCXGXG motif repeat units lie at residues 154 to 161 (CTKCDGVG), 171 to 178 (CTKCNGAG), 197 to 204 (CDKCNGVG), and 211 to 218 (CKNCHGKG).

It belongs to the DnaJ family. Homodimer. It depends on Zn(2+) as a cofactor.

It is found in the cytoplasm. Participates actively in the response to hyperosmotic and heat shock by preventing the aggregation of stress-denatured proteins and by disaggregating proteins, also in an autonomous, DnaK-independent fashion. Unfolded proteins bind initially to DnaJ; upon interaction with the DnaJ-bound protein, DnaK hydrolyzes its bound ATP, resulting in the formation of a stable complex. GrpE releases ADP from DnaK; ATP binding to DnaK triggers the release of the substrate protein, thus completing the reaction cycle. Several rounds of ATP-dependent interactions between DnaJ, DnaK and GrpE are required for fully efficient folding. Also involved, together with DnaK and GrpE, in the DNA replication of plasmids through activation of initiation proteins. The polypeptide is Chaperone protein DnaJ (Mesoplasma florum (strain ATCC 33453 / NBRC 100688 / NCTC 11704 / L1) (Acholeplasma florum)).